The following is a 325-amino-acid chain: Polyamine aminopropyltransferase (325 aa).

A PABS domain is found at 11 to 248 (SSMAEDFAVE…TLWAMAMASD (238 aa)). S-methyl-5'-thioadenosine is bound at residue Q44. Spermidine contacts are provided by H75 and D99. S-methyl-5'-thioadenosine is bound by residues E119 and 151-152 (DG). D169 (proton acceptor) is an active-site residue. Residue P176 coordinates S-methyl-5'-thioadenosine.

Belongs to the spermidine/spermine synthase family. As to quaternary structure, homodimer or homotetramer.

It is found in the cytoplasm. The enzyme catalyses S-adenosyl 3-(methylsulfanyl)propylamine + putrescine = S-methyl-5'-thioadenosine + spermidine + H(+). It functions in the pathway amine and polyamine biosynthesis; spermidine biosynthesis; spermidine from putrescine: step 1/1. Its function is as follows. Catalyzes the irreversible transfer of a propylamine group from the amino donor S-adenosylmethioninamine (decarboxy-AdoMet) to putrescine (1,4-diaminobutane) to yield spermidine. In Nitrosomonas europaea (strain ATCC 19718 / CIP 103999 / KCTC 2705 / NBRC 14298), this protein is Polyamine aminopropyltransferase.